The chain runs to 157 residues: Cytochrome c-type biogenesis protein CcmE (157 aa).

The Cytoplasmic segment spans residues Met1–Arg8. The helical; Signal-anchor for type II membrane protein transmembrane segment at Leu9–Ala29 threads the bilayer. Residues Leu30–Ser157 are Periplasmic-facing. Heme is bound by residues His124 and Tyr128.

It belongs to the CcmE/CycJ family.

The protein localises to the cell inner membrane. Its function is as follows. Heme chaperone required for the biogenesis of c-type cytochromes. Transiently binds heme delivered by CcmC and transfers the heme to apo-cytochromes in a process facilitated by CcmF and CcmH. The chain is Cytochrome c-type biogenesis protein CcmE from Saccharophagus degradans (strain 2-40 / ATCC 43961 / DSM 17024).